Consider the following 900-residue polypeptide: Sterol regulatory element-binding protein 1 (900 aa).

The span at methionine 1 to alanine 16 shows a compositional bias: low complexity. Disordered regions lie at residues methionine 1–serine 49 and threonine 206–threonine 263. A nuclear form of sre1; complements deletions of sre1 or scp1 region spans residues methionine 1 to proline 440. Topologically, residues methionine 1 to threonine 442 are cytoplasmic. Residues threonine 21 to serine 32 are compositionally biased toward polar residues. Residues alanine 35 to serine 49 are compositionally biased toward low complexity. The region spanning proline 260–leucine 332 is the bHLH domain. A helical membrane pass occupies residues glycine 443–leucine 463. The Lumenal portion of the chain corresponds to histidine 464–serine 509. Residues threonine 510–threonine 530 form a helical membrane-spanning segment. At histidine 531–alanine 900 the chain is on the cytoplasmic side. Residues serine 898 and serine 899 each carry the phosphoserine modification.

In terms of assembly, forms a tight complex with scp1, composed of 4 copies of scp1 and 4 copies of sre1, which protects sre1 precursor from degradation by the proteasome. Post-translationally, in low oxygen or sterol conditions, undergoes proteolytic cleavage by rhomboid-type protease rbd2 and is released as soluble transcription factor from the membrane. In terms of processing, processed form is phosphorylated.

Its subcellular location is the endoplasmic reticulum membrane. The protein localises to the nucleus. Its function is as follows. Precursor of the transcription factor form (Processed sterol regulatory element-binding protein 1), which is embedded in the endoplasmic reticulum membrane. Low oxygen or sterol conditions promote processing of this form, releasing the transcription factor form that translocates into the nucleus and activates transcription of genes required for adaptation to anaerobic growth. In terms of biological role, transcriptional activator required for transcription of genes required for adaptation to anaerobic growth like those implicated in the nonrespiratory oxygen-consumptive biosynthetic pathways of sterol, heme, sphingolipid, and ubiquinone biosynthesis. May monitor oxygen levels through sterol synthesis steps which require oxygen. This is Sterol regulatory element-binding protein 1 from Schizosaccharomyces pombe (strain 972 / ATCC 24843) (Fission yeast).